Reading from the N-terminus, the 520-residue chain is Cytochrome P450 734A1 (520 aa).

A helical transmembrane segment spans residues 13-33 (VLVLSVILSLVIVKGMSLLWW). Residue Cys-463 participates in heme binding.

The protein belongs to the cytochrome P450 family. It depends on heme as a cofactor.

It localises to the membrane. Functionally, cytochrome P450 involved in brassinosteroids (BRs) inactivation and regulation of BRs homeostasis. Inactivates the BRs castasterone (CS) and brassinolide (BL) through carbon 26 hydroxylation. Acts in association with CYP72C1 to inactivate BRs and modulate photomorphogenesis. This Arabidopsis thaliana (Mouse-ear cress) protein is Cytochrome P450 734A1 (CYP734A1).